The sequence spans 369 residues: tRNA pseudouridine synthase D (369 aa).

The active-site Nucleophile is the aspartate 80. The TRUD domain maps to 156 to 318 (GIPNWFGEQR…LKQERRALRL (163 aa)).

It belongs to the pseudouridine synthase TruD family.

It catalyses the reaction uridine(13) in tRNA = pseudouridine(13) in tRNA. Its function is as follows. Responsible for synthesis of pseudouridine from uracil-13 in transfer RNAs. The chain is tRNA pseudouridine synthase D from Xanthomonas euvesicatoria pv. vesicatoria (strain 85-10) (Xanthomonas campestris pv. vesicatoria).